Reading from the N-terminus, the 419-residue chain is Histidine--tRNA ligase (419 aa).

This sequence belongs to the class-II aminoacyl-tRNA synthetase family. Homodimer.

It is found in the cytoplasm. The catalysed reaction is tRNA(His) + L-histidine + ATP = L-histidyl-tRNA(His) + AMP + diphosphate + H(+). The protein is Histidine--tRNA ligase of Mycoplasmoides gallisepticum (strain R(low / passage 15 / clone 2)) (Mycoplasma gallisepticum).